A 447-amino-acid polypeptide reads, in one-letter code: Phosphoglucosamine mutase (447 aa).

Residue Ser100 is the Phosphoserine intermediate of the active site. Positions 100, 240, 242, and 244 each coordinate Mg(2+). Ser100 carries the phosphoserine modification.

It belongs to the phosphohexose mutase family. Requires Mg(2+) as cofactor. Activated by phosphorylation.

It catalyses the reaction alpha-D-glucosamine 1-phosphate = D-glucosamine 6-phosphate. Functionally, catalyzes the conversion of glucosamine-6-phosphate to glucosamine-1-phosphate. The sequence is that of Phosphoglucosamine mutase from Anoxybacillus flavithermus (strain DSM 21510 / WK1).